We begin with the raw amino-acid sequence, 281 residues long: Undecaprenyl-diphosphatase (281 aa).

Transmembrane regions (helical) follow at residues 5–25 (LFVLKSIVLGIVEGVTEFLPI), 48–68 (VKMYTYVIQLGAIMAVVLLYW), 92–112 (FWFMIFIACIPGAAVKLLLDA), 118–138 (LMTPVSVAIVLILGGLWMIYA), 154–174 (VTPKQALIIGAFQCLAIIPGM), 192–212 (VVAAEFSFFLAIPVMFGYSLL), 226–246 (AELISLVVGFIVAFIVAVAVI), and 261–281 (FAIYRMIFAVIVLIAGFMGFF).

Belongs to the UppP family.

It is found in the cell membrane. It carries out the reaction di-trans,octa-cis-undecaprenyl diphosphate + H2O = di-trans,octa-cis-undecaprenyl phosphate + phosphate + H(+). Its function is as follows. Catalyzes the dephosphorylation of undecaprenyl diphosphate (UPP). Confers resistance to bacitracin. In Ruminiclostridium cellulolyticum (strain ATCC 35319 / DSM 5812 / JCM 6584 / H10) (Clostridium cellulolyticum), this protein is Undecaprenyl-diphosphatase.